Consider the following 345-residue polypeptide: Aspartate-semialdehyde dehydrogenase (345 aa).

Residues 11 to 14 (TGQV) and 39 to 40 (RS) each bind NADP(+). Arginine 99 is a binding site for phosphate. Cysteine 130 serves as the catalytic Acyl-thioester intermediate. Residue glutamine 157 coordinates substrate. 160–161 (SG) lines the NADP(+) pocket. Lysine 227 lines the phosphate pocket. Position 249 (arginine 249) interacts with substrate. Histidine 256 serves as the catalytic Proton acceptor. Position 325 (asparagine 325) interacts with NADP(+).

The protein belongs to the aspartate-semialdehyde dehydrogenase family. In terms of assembly, homodimer.

The catalysed reaction is L-aspartate 4-semialdehyde + phosphate + NADP(+) = 4-phospho-L-aspartate + NADPH + H(+). Its pathway is amino-acid biosynthesis; L-lysine biosynthesis via DAP pathway; (S)-tetrahydrodipicolinate from L-aspartate: step 2/4. It participates in amino-acid biosynthesis; L-methionine biosynthesis via de novo pathway; L-homoserine from L-aspartate: step 2/3. The protein operates within amino-acid biosynthesis; L-threonine biosynthesis; L-threonine from L-aspartate: step 2/5. In terms of biological role, catalyzes the NADPH-dependent formation of L-aspartate-semialdehyde (L-ASA) by the reductive dephosphorylation of L-aspartyl-4-phosphate. This chain is Aspartate-semialdehyde dehydrogenase, found in Mycobacterium bovis (strain ATCC BAA-935 / AF2122/97).